A 140-amino-acid chain; its full sequence is Putative pre-16S rRNA nuclease (140 aa).

It belongs to the YqgF nuclease family.

The protein resides in the cytoplasm. In terms of biological role, could be a nuclease involved in processing of the 5'-end of pre-16S rRNA. This is Putative pre-16S rRNA nuclease from Edwardsiella ictaluri (strain 93-146).